Here is a 461-residue protein sequence, read N- to C-terminus: Fumarate hydratase class II (461 aa).

Residues 99–101 (SGT), 130–133 (HPND), 140–142 (STN), and Thr188 each bind substrate. His189 functions as the Proton donor/acceptor in the catalytic mechanism. Ser319 is an active-site residue. Residues Ser320 and 325–327 (KVN) contribute to the substrate site.

This sequence belongs to the class-II fumarase/aspartase family. Fumarase subfamily. In terms of assembly, homotetramer.

The protein localises to the cytoplasm. The catalysed reaction is (S)-malate = fumarate + H2O. The protein operates within carbohydrate metabolism; tricarboxylic acid cycle; (S)-malate from fumarate: step 1/1. Involved in the TCA cycle. Catalyzes the stereospecific interconversion of fumarate to L-malate. In Prochlorococcus marinus subsp. pastoris (strain CCMP1986 / NIES-2087 / MED4), this protein is Fumarate hydratase class II.